The sequence spans 228 residues: Max-interacting protein 1 (228 aa).

Disordered stretches follow at residues 29-76 (GYAS…NELE) and 161-228 (IGST…SFTS). Residues 43–56 (QHSKPPRRLSRAQK) show a composition bias toward basic residues. Residues 57–70 (HSSGSSNTSTANRS) show a composition bias toward polar residues. Positions 67–119 (ANRSTHNELEKNRRAHLRLCLERLKVLIPLGPDCTRHTTLGLLNKAKAHIKKL) constitute a bHLH domain. Over residues 173–183 (EREEIEVDVES) the composition is skewed to acidic residues. Positions 216-228 (GYSSASVKLSFTS) are enriched in polar residues.

In terms of assembly, interacts with SMC3. Efficient DNA binding requires dimerization with another bHLH protein. Binds DNA as a heterodimer with MAX. Interacts with RNF17. In terms of tissue distribution, high levels found in the brain, heart and lung while lower levels are seen in the liver, kidney and skeletal muscle.

The protein localises to the nucleus. Functionally, transcriptional repressor. MXI1 binds with MAX to form a sequence-specific DNA-binding protein complex which recognizes the core sequence 5'-CAC[GA]TG-3'. MXI1 thus antagonizes MYC transcriptional activity by competing for MAX. The sequence is that of Max-interacting protein 1 (MXI1) from Homo sapiens (Human).